A 619-amino-acid polypeptide reads, in one-letter code: MHSDTNGRTKSNNSPSDNNPNETVILIDSDKEEDASIREANLPVRLYPDRRVGRRRDALNRFVRSDSRSRNSQRTHITASSERPDFQANNDDITIIREVGRFFGDDGPIDPSAHYVDLDQEPGSETLETPRTIQVDNTNGYLNDNGNNNESDDGLTIVEERTTRPRVTLNLPGGERLEVTATTTDIPIRRSFEFQEDLGASRRQLLRRSATRARNLFVDRSDENDEDWTDDTHNLPEAIQRARRESRMRMSRRIAERQRRVQQQRVSSDENISTSIRLQSIRERIQSYTPDIRSAFHRAESLHEFRSILQNVAPITLQECEEELMALFTEFRNQLLQNWAIDRVRNTQEEALRLHREALERQERTAGRVFHRGTLRESITNYLNFNGEDGFLSRLWSGPALSDADEERHTQNIIDMIQEREERERDVVMKNLMNKTRAQQEEFEARAASLPEGYSASFDTTPKMKLDITKNGKEETIIVTDDDLAKTLEDIPVCCLCGAELGVGIPDDFTGISQKDRGVSFEGLVSKYKFHCPYQTLARPSMLDRDLSKRTFIASCGHAFCGRCFARIDNAKKKSKMPKKKLAQLKGSAHPDNYGPKLCPADSCKKLIRSRGRLKEVYF.

The interval 1–23 (MHSDTNGRTKSNNSPSDNNPNET) is disordered. The segment covering 11–21 (SNNSPSDNNPN) has biased composition (low complexity). 2 positions are modified to phosphoserine: Ser14 and Ser29. The tract at residues 63-90 (VRSDSRSRNSQRTHITASSERPDFQANN) is disordered. Positions 70-90 (RNSQRTHITASSERPDFQANN) are enriched in polar residues. Residues 201–335 (SRRQLLRRSA…ALFTEFRNQL (135 aa)) are EUC1 interaction domain.

As to quaternary structure, component of the heterodimeric SUMO-targeted ubiquitin ligase (STUbL) complex composed of SLX5 and SLX8. Interacts with sirtuin SIR2. Interacts with KAR9. Interacts with EUC1.

It is found in the nucleus. It localises to the chromosome. Its subcellular location is the centromere. The protein resides in the kinetochore. The catalysed reaction is S-ubiquitinyl-[E2 ubiquitin-conjugating enzyme]-L-cysteine + [acceptor protein]-L-lysine = [E2 ubiquitin-conjugating enzyme]-L-cysteine + N(6)-ubiquitinyl-[acceptor protein]-L-lysine.. It functions in the pathway protein modification; protein ubiquitination. Component of the SUMO-targeted ubiquitin ligase (STUbL) complex SLX5/SLX8 that mediates ubiquitination and subsequent desumoylation of sumoylated proteins and proteins containing SUMO-like domains for their degradation. The STUbL complex SLX5/SLX8 stimulates ubiquitin conjugating enzymes, including UBC1, UBC4, UBC5 and UBC13-MMS2, and mediates the proteolytic down-regulation of sumoylated proteins. The STUbL complex SLX5/SLX8 is involved in ubiquitin-mediated degradation of histone variant CSE4, preventing mislocalization to euchromatin. The complex plays an essential role in maintenance of chromosome stability and links SUMO-dependent ubiquitination to a centromere-specific function during mitosis. The complex is involved in proteolysis of spindle positioning protein KAR9 and ensures correct spindle function by regulating levels of microtubule-associated proteins. During replication, the complex helps prevent DNA lesions via recombination and has a role in localizing the DNA damage protein DCD2. The complex especially ubiquitinates the nuclease YEN1 and prevents persistent accumulation of a fraction of YEN1 associated with sites of activity in late G2/M and helps maintain the balance between pro- and anti-crossover pathways during homologous recombination. It is also involved in ubiquitin-mediated degradation of DNA repair proteins RAD52 and RAD57. Along with SIR2, promotes silencing of genes at telomeric or ribosomal DNA (rDNA) loci. Finally, the complex is recruited to distinct genomic hotspots of non-H2B protein ubiquitination (ub-hotspots) by the sumoylated transcription factor-like protein EUC1 where it ubiquitinates EUC1 and presumably other targets. This chain is E3 ubiquitin-protein ligase complex SLX5-SLX8 subunit SLX5 (SLX5), found in Saccharomyces cerevisiae (strain ATCC 204508 / S288c) (Baker's yeast).